The following is a 726-amino-acid chain: Probable cyclic nucleotide-gated ion channel 14 (726 aa).

Over 1–86 the chain is Cytoplasmic; sequence MEFKRDNTVR…GDAVLQWNRV (86 aa). Residues 87–107 traverse the membrane as a helical segment; the sequence is FLFWCLVALYVDPLFFFLSSV. Over 108 to 122 the chain is Extracellular; it reads KRIGRSSCMTTDLKL. A helical transmembrane segment spans residues 123 to 143; the sequence is GIVITFFRTLADLFYVLHIVI. At 144 to 177 the chain is on the cytoplasmic side; that stretch reads KFRTAYVSRTSRVFGRGELVKDPKLIARRYLRSD. Residues 178-198 form a helical membrane-spanning segment; it reads FIVDLIACLPLPQIVSWFILP. The Extracellular segment spans residues 199–211; the sequence is SIRSSHSDHTTNA. A helical transmembrane segment spans residues 212–232; that stretch reads LVLIVLVQYIPRLYLIFPLSA. Over 233–252 the chain is Cytoplasmic; that stretch reads EIIKATGVVTTTAWAGAAYN. A helical membrane pass occupies residues 253–273; sequence LLQYMLASHILGSAWYLLSIE. At 274–377 the chain is on the extracellular side; sequence RQATCWKAEC…LSTSTSVLET (104 aa). Residues 378–398 form a helical membrane-spanning segment; that stretch reads MFAILVAIFGLVLFALLIGNM. Over 399 to 726 the chain is Cytoplasmic; the sequence is QTYLQSITVR…PDEPDFSVDD (328 aa). A nucleoside 3',5'-cyclic phosphate is bound by residues 481–605 and Glu552; that span reads LFAQ…SKKL. A calmodulin-binding region spans residues 597 to 612; it reads FRRLHSKKLQHTFRYY. The region spanning 617–646 is the IQ domain; the sequence is RTWAACFVQVAWRRYKRKKLAKSLSLAESF. A disordered region spans residues 707 to 726; sequence KDVEIPMLPKPDEPDFSVDD.

Belongs to the cyclic nucleotide-gated cation channel (TC 1.A.1.5) family. In terms of assembly, homotetramer or heterotetramer.

It localises to the cell membrane. In terms of biological role, probable cyclic nucleotide-gated ion channel. In Arabidopsis thaliana (Mouse-ear cress), this protein is Probable cyclic nucleotide-gated ion channel 14 (CNGC14).